The sequence spans 118 residues: V-type proton ATPase subunit G 2 (118 aa).

The disordered stretch occupies residues Ala-23–Asn-91. The span at Gln-35–Phe-55 shows a compositional bias: basic and acidic residues. Polar residues-rich tracts occupy residues Gln-56–Leu-69 and Arg-78–Gln-89.

It belongs to the V-ATPase G subunit family. V-ATPase is a heteromultimeric enzyme made up of two complexes: the ATP-hydrolytic V1 complex and the proton translocation V0 complex. The V1 complex consists of three catalytic AB heterodimers that form a heterohexamer, three peripheral stalks each consisting of EG heterodimers, one central rotor including subunits D and F, and the regulatory subunits C and H. The proton translocation complex V0 consists of the proton transport subunit a, a ring of proteolipid subunits c9c'', rotary subunit d, subunits e and f, and the accessory subunits ATP6AP1/Ac45 and ATP6AP2/PRR.

It localises to the melanosome. Its subcellular location is the cytoplasmic vesicle. The protein localises to the clathrin-coated vesicle membrane. In terms of biological role, subunit of the V1 complex of vacuolar(H+)-ATPase (V-ATPase), a multisubunit enzyme composed of a peripheral complex (V1) that hydrolyzes ATP and a membrane integral complex (V0) that translocates protons. V-ATPase is responsible for acidifying and maintaining the pH of intracellular compartments and in some cell types, is targeted to the plasma membrane, where it is responsible for acidifying the extracellular environment. The protein is V-type proton ATPase subunit G 2 (Atp6v1g2) of Mus musculus (Mouse).